Here is a 542-residue protein sequence, read N- to C-terminus: Putative leucine aminopeptidase 1 (542 aa).

Mn(2+)-binding residues include Lys-294 and Asp-299. Lys-323 is a catalytic residue. Mn(2+) is bound by residues Asp-336, Asp-396, and Glu-398. Arg-400 is an active-site residue.

This sequence belongs to the peptidase M17 family. In terms of assembly, homohexamer (dimer of homotrimers). It depends on Mn(2+) as a cofactor.

It is found in the cytoplasm. The enzyme catalyses Release of an N-terminal amino acid, Xaa-|-Yaa-, in which Xaa is preferably Leu, but may be other amino acids including Pro although not Arg or Lys, and Yaa may be Pro. Amino acid amides and methyl esters are also readily hydrolyzed, but rates on arylamides are exceedingly low.. It catalyses the reaction Release of N-terminal proline from a peptide.. Functionally, presumably involved in the processing and regular turnover of intracellular proteins. Catalyzes the removal of unsubstituted N-terminal amino acids from various peptides. In Oryza sativa subsp. japonica (Rice), this protein is Putative leucine aminopeptidase 1.